We begin with the raw amino-acid sequence, 330 residues long: 1-aminocyclopropane-1-carboxylate oxidase 2 (330 aa).

Positions 153–253 (PNFGTKVSNY…RMSIASFYNP (101 aa)) constitute a Fe2OG dioxygenase domain. Positions 177, 179, and 234 each coordinate Fe cation.

Belongs to the iron/ascorbate-dependent oxidoreductase family. As to quaternary structure, monomer. The cofactor is Fe cation.

The catalysed reaction is 1-aminocyclopropane-1-carboxylate + L-ascorbate + O2 = ethene + L-dehydroascorbate + hydrogen cyanide + CO2 + 2 H2O. It functions in the pathway alkene biosynthesis; ethylene biosynthesis via S-adenosyl-L-methionine; ethylene from S-adenosyl-L-methionine: step 2/2. The chain is 1-aminocyclopropane-1-carboxylate oxidase 2 (ACO2) from Malus domestica (Apple).